The sequence spans 382 residues: 1-deoxy-D-xylulose 5-phosphate reductoisomerase (382 aa).

NADPH contacts are provided by Thr-10, Gly-11, Ser-12, Ile-13, Gly-36, and Asn-122. Lys-123 lines the 1-deoxy-D-xylulose 5-phosphate pocket. Residue Glu-124 participates in NADPH binding. Residue Asp-148 coordinates Mn(2+). 1-deoxy-D-xylulose 5-phosphate is bound by residues Ser-149, Glu-150, Ser-174, and His-197. Glu-150 contributes to the Mn(2+) binding site. Gly-203 provides a ligand contact to NADPH. Positions 210, 215, 216, and 219 each coordinate 1-deoxy-D-xylulose 5-phosphate. Mn(2+) is bound at residue Glu-219.

It belongs to the DXR family. Mg(2+) is required as a cofactor. It depends on Mn(2+) as a cofactor.

It carries out the reaction 2-C-methyl-D-erythritol 4-phosphate + NADP(+) = 1-deoxy-D-xylulose 5-phosphate + NADPH + H(+). It participates in isoprenoid biosynthesis; isopentenyl diphosphate biosynthesis via DXP pathway; isopentenyl diphosphate from 1-deoxy-D-xylulose 5-phosphate: step 1/6. In terms of biological role, catalyzes the NADPH-dependent rearrangement and reduction of 1-deoxy-D-xylulose-5-phosphate (DXP) to 2-C-methyl-D-erythritol 4-phosphate (MEP). In Pelodictyon phaeoclathratiforme (strain DSM 5477 / BU-1), this protein is 1-deoxy-D-xylulose 5-phosphate reductoisomerase.